A 707-amino-acid chain; its full sequence is E3 ubiquitin-protein ligase MARCHF7 (707 aa).

Met-1 is subject to N-acetylmethionine. 5 disordered regions span residues 1 to 126 (MESK…QVPR), 157 to 279 (LMDY…RRTT), 294 to 343 (FFSR…RASE), 361 to 425 (SHNH…HIFR), and 444 to 473 (AANR…GRNT). The segment covering 17-33 (SSSLSARMMSGSRGSSL) has biased composition (low complexity). Residues 37 to 48 (YHSRDSSFRLDS) show a composition bias toward basic and acidic residues. Residues 52–65 (STSASASASPFQSA) show a composition bias toward low complexity. Composition is skewed to polar residues over residues 66–83 (WYSE…SQNQ), 95–126 (SCTN…QVPR), 189–212 (NSMS…HQTI), and 254–270 (ISNS…FQES). Residues 294-303 (FFSRRSSQDS) show a composition bias toward low complexity. Composition is skewed to polar residues over residues 304–336 (LNTR…TSEV), 373–392 (FNQE…SLRN), and 412–421 (IPTSDTSSRS). Ser-317 and Ser-389 each carry phosphoserine. Positions 444–470 (AANRPQASAASSSATTGGSTSDSAQGG) are enriched in low complexity. The RING-CH-type zinc-finger motif lies at 544-614 (SEEEEGDLCR…ELCKEKLELN (71 aa)). 8 residues coordinate Zn(2+): Cys-552, Cys-555, Cys-570, Cys-572, His-580, Cys-583, Cys-604, and Cys-607. Residue Thr-686 is modified to Phosphothreonine. 2 positions are modified to phosphoserine: Ser-687 and Ser-691.

It is found in the cytoplasm. The enzyme catalyses S-ubiquitinyl-[E2 ubiquitin-conjugating enzyme]-L-cysteine + [acceptor protein]-L-lysine = [E2 ubiquitin-conjugating enzyme]-L-cysteine + N(6)-ubiquitinyl-[acceptor protein]-L-lysine.. The protein operates within protein modification; protein ubiquitination. E3 ubiquitin-protein ligase which may specifically enhance the E2 activity of HIP2. E3 ubiquitin ligases accept ubiquitin from an E2 ubiquitin-conjugating enzyme in the form of a thioester and then directly transfer the ubiquitin to targeted substrates. May be involved in T-cell proliferation by regulating LIF secretion. May play a role in lysosome homeostasis. Promotes 'Lys-6', 'Lys-11' and 'Lys-63'-linked mixed polyubiquitination on ATG14 leading to the inhibition of autophagy by impairing the interaction between ATG14 and STX7. Participates in the dopamine-mediated negative regulation of the NLRP3 inflammasome by promoting its uibiquitination and subsequent degradation. This Pongo abelii (Sumatran orangutan) protein is E3 ubiquitin-protein ligase MARCHF7 (MARCHF7).